A 523-amino-acid polypeptide reads, in one-letter code: Glycerate kinase (523 aa).

Ser-60 carries the post-translational modification Phosphoserine.

It belongs to the glycerate kinase type-2 family. In terms of tissue distribution, widely expressed.

The protein resides in the cytoplasm. It is found in the mitochondrion. It catalyses the reaction (R)-glycerate + ATP = (2R)-3-phosphoglycerate + ADP + H(+). This is Glycerate kinase (GLYCTK) from Homo sapiens (Human).